Reading from the N-terminus, the 502-residue chain is Cardiolipin synthase (502 aa).

3 consecutive transmembrane segments (helical) span residues 7–27, 29–49, and 59–79; these read VAIL…YWGG, LLGI…FVIS, and IAWL…YLLF. PLD phosphodiesterase domains are found at residues 237-264 and 415-442; these read INFR…GDEY and EKGF…DMRS. Active-site residues include His242, Lys244, Asp249, His420, Lys422, and Asp427.

It belongs to the phospholipase D family. Cardiolipin synthase subfamily.

It is found in the cell membrane. The enzyme catalyses 2 a 1,2-diacyl-sn-glycero-3-phospho-(1'-sn-glycerol) = a cardiolipin + glycerol. Catalyzes the reversible phosphatidyl group transfer from one phosphatidylglycerol molecule to another to form cardiolipin (CL) (diphosphatidylglycerol) and glycerol. The chain is Cardiolipin synthase (cls) from Geobacillus thermodenitrificans (strain NG80-2).